A 506-amino-acid polypeptide reads, in one-letter code: Histidine ammonia-lyase (506 aa).

Residues 143–145 (ASG) constitute a cross-link (5-imidazolinone (Ala-Gly)). The residue at position 144 (serine 144) is a 2,3-didehydroalanine (Ser).

It belongs to the PAL/histidase family. Contains an active site 4-methylidene-imidazol-5-one (MIO), which is formed autocatalytically by cyclization and dehydration of residues Ala-Ser-Gly.

The protein localises to the cytoplasm. The catalysed reaction is L-histidine = trans-urocanate + NH4(+). It functions in the pathway amino-acid degradation; L-histidine degradation into L-glutamate; N-formimidoyl-L-glutamate from L-histidine: step 1/3. In Salmonella paratyphi C (strain RKS4594), this protein is Histidine ammonia-lyase.